A 309-amino-acid polypeptide reads, in one-letter code: Coenzyme PQQ synthesis protein B (309 aa).

It belongs to the PqqB family.

Its pathway is cofactor biosynthesis; pyrroloquinoline quinone biosynthesis. Functionally, may be involved in the transport of PQQ or its precursor to the periplasm. This Nitrosococcus oceani (strain ATCC 19707 / BCRC 17464 / JCM 30415 / NCIMB 11848 / C-107) protein is Coenzyme PQQ synthesis protein B.